We begin with the raw amino-acid sequence, 524 residues long: Portal protein (524 aa).

Residues 486–516 (AMKDILQMTDEEIEQEAKQIEEESKEARFQD) are a coiled coil. Residues 500-516 (QEAKQIEEESKEARFQD) show a composition bias toward basic and acidic residues. The tract at residues 500–524 (QEAKQIEEESKEARFQDPDQEQEDF) is disordered.

This sequence belongs to the Tevenvirinae portal protein family. As to quaternary structure, homododecamer. Interacts with the large terminase subunit. Interacts with the major capsid protein. Interacts with the capsid vertex protein.

The protein resides in the virion. It is found in the host cell inner membrane. Functionally, forms the portal vertex of the capsid. This portal plays critical roles in head assembly, genome packaging, neck/tail attachment, and genome ejection. The portal protein multimerizes as a single ring-shaped homododecamer arranged around a central channel. Binds to the terminase subunits to form the packaging machine. Attaches to the host inner membrane most likely through interaction with host yidC and forms together with chaperone gp40 an initiator complex to form the prohead. This is Portal protein (20) from Enterobacteria phage T4 (Bacteriophage T4).